Here is a 342-residue protein sequence, read N- to C-terminus: Delta(6)-protoilludene synthase (342 aa).

Mg(2+)-binding residues include aspartate 81, asparagine 217, serine 221, and glutamate 225. Positions aspartate 81 to aspartate 85 match the DDXXD motif motif. (2E,6E)-farnesyl diphosphate-binding residues include arginine 306 and tyrosine 307.

The protein belongs to the terpene synthase family. It depends on Mg(2+) as a cofactor.

The catalysed reaction is (2E,6E)-farnesyl diphosphate = Delta(6)-protoilludene + diphosphate. Functionally, delta(6)-protoilludene synthase, part of the gene cluster that mediates the biosynthesis of melleolides, a range of antifungal and phytotoxic polyketide derivatives composed of an orsellinic acid (OA) moiety esterified to various sesquiterpene alcohols. The first step in melleolides biosynthesis is performed by the delta(6)-protoilludene synthase PRO1 which catalyzes the cyclization of farnesyl diphosphate to protoilludene. The orsellinic acid synthase armB produces OA by condensing acetyl-CoA with 3 malonyl-CoA units in a three-round chain elongation reaction folowed by a C2-C7 ring closure. ArmB further catalyzes the trans-esterification of OA to the various sesquiterpene alcohols resulting from the hydroxylation of protoilludene. The melleolides cluster also includes 5 cytochrome P450 monooxygenases, 4 NAD(+)-dependent oxidoreductases, one flavin-dependent oxidoreductase, and one O-methyltransferase. The cytochrome P450 monooxygenases may be involved in protoilludene hydroxylation to elaborate melleolides with multiple alcohol groups, such as melleolide D, which carries alcohol functionalities at C-4, C-5, C-10, and C-13. The role of the NAD(+)-dependent enzymes remains unknown. Numerous melleolides, including arnamial, show 5'-O-methylation of the aromatic moiety which may be catalyzed by the methyltransferase encoded in the cluster. The flavin-dependent oxidoreductase might represent the dehydrogenase yielding the aldehyde in position 1 of arnamial and other melleolides. Finally, several halogenases, localized outside of the cluster, are able to catalyze the transfer of a single chlorine atom to the melleolide backbone, resulting in a 6'-chloromelleolide product. The protein is Delta(6)-protoilludene synthase of Armillaria ostoyae (Armillaria root rot fungus).